The primary structure comprises 397 residues: Putative 3'(2'),5'-bisphosphate nucleotidase, mitochondrial (397 aa).

A mitochondrion-targeting transit peptide spans 1–16 (MYILDTGARFSAVRFS). Asp-91 functions as the Proton acceptor in the catalytic mechanism. The Mg(2+) site is built by Glu-114, Asp-174, Ile-176, and Asp-177. Thr-179 acts as the Proton acceptor in catalysis. Positions 179, 305, 308, and 334 each coordinate adenosine 3',5'-bisphosphate. Residues Ser-305, Lys-308, and Asp-334 each contribute to the AMP site. Asp-334 provides a ligand contact to Mg(2+).

The protein belongs to the inositol monophosphatase superfamily. It depends on Mg(2+) as a cofactor.

It localises to the mitochondrion. The enzyme catalyses 3'-phosphoadenylyl sulfate + H2O = adenosine 5'-phosphosulfate + phosphate. It carries out the reaction adenosine 3',5'-bisphosphate + H2O = AMP + phosphate. The catalysed reaction is adenosine 2',5'-bisphosphate + H2O = AMP + phosphate. Its function is as follows. Phosphatase that converts adenosine 3'-phosphate 5'-phosphosulfate (PAPS) to adenosine 5'-phosphosulfate (APS) and 3'(2')-phosphoadenosine 5'-phosphate (PAP) to AMP. The chain is Putative 3'(2'),5'-bisphosphate nucleotidase, mitochondrial from Arabidopsis thaliana (Mouse-ear cress).